The following is a 723-amino-acid chain: Fatty acid oxidation complex subunit alpha (723 aa).

The tract at residues 1-189 (MIYQAKTLQV…KVGLLDAIVD (189 aa)) is enoyl-CoA hydratase/isomerase. D296 contributes to the substrate binding site. Positions 311–723 (SQDTQHAAVL…FYSAQQVSAL (413 aa)) are 3-hydroxyacyl-CoA dehydrogenase. NAD(+) contacts are provided by residues M325, D344, 401 to 403 (VVE), K408, and S430. H451 acts as the For 3-hydroxyacyl-CoA dehydrogenase activity in catalysis. N454 lines the NAD(+) pocket. Substrate is bound by residues N501 and Y661.

In the N-terminal section; belongs to the enoyl-CoA hydratase/isomerase family. The protein in the C-terminal section; belongs to the 3-hydroxyacyl-CoA dehydrogenase family. In terms of assembly, heterotetramer of two alpha chains (FadB) and two beta chains (FadA).

It catalyses the reaction a (3S)-3-hydroxyacyl-CoA + NAD(+) = a 3-oxoacyl-CoA + NADH + H(+). The catalysed reaction is a (3S)-3-hydroxyacyl-CoA = a (2E)-enoyl-CoA + H2O. The enzyme catalyses a 4-saturated-(3S)-3-hydroxyacyl-CoA = a (3E)-enoyl-CoA + H2O. It carries out the reaction (3S)-3-hydroxybutanoyl-CoA = (3R)-3-hydroxybutanoyl-CoA. It catalyses the reaction a (3Z)-enoyl-CoA = a 4-saturated (2E)-enoyl-CoA. The catalysed reaction is a (3E)-enoyl-CoA = a 4-saturated (2E)-enoyl-CoA. The protein operates within lipid metabolism; fatty acid beta-oxidation. Functionally, involved in the aerobic and anaerobic degradation of long-chain fatty acids via beta-oxidation cycle. Catalyzes the formation of 3-oxoacyl-CoA from enoyl-CoA via L-3-hydroxyacyl-CoA. It can also use D-3-hydroxyacyl-CoA and cis-3-enoyl-CoA as substrate. In Vibrio cholerae serotype O1 (strain ATCC 39315 / El Tor Inaba N16961), this protein is Fatty acid oxidation complex subunit alpha.